A 183-amino-acid chain; its full sequence is Hypoxanthine/guanine phosphoribosyltransferase (183 aa).

This sequence belongs to the purine/pyrimidine phosphoribosyltransferase family. Archaeal HPRT subfamily. In terms of assembly, homodimer.

Its subcellular location is the cytoplasm. The enzyme catalyses IMP + diphosphate = hypoxanthine + 5-phospho-alpha-D-ribose 1-diphosphate. It catalyses the reaction GMP + diphosphate = guanine + 5-phospho-alpha-D-ribose 1-diphosphate. The protein operates within purine metabolism; IMP biosynthesis via salvage pathway; IMP from hypoxanthine: step 1/1. Functionally, catalyzes a salvage reaction resulting in the formation of IMP that is energically less costly than de novo synthesis. This is Hypoxanthine/guanine phosphoribosyltransferase from Methanocaldococcus infernus (strain DSM 11812 / JCM 15783 / ME).